Reading from the N-terminus, the 109-residue chain is Spermidine export protein MdtI (109 aa).

Helical transmembrane passes span tryptophan 6–leucine 26, tryptophan 36–valine 56, isoleucine 63–methionine 83, and leucine 88–methionine 108.

This sequence belongs to the drug/metabolite transporter (DMT) superfamily. Small multidrug resistance (SMR) (TC 2.A.7.1) family. MdtI subfamily. As to quaternary structure, forms a complex with MdtJ.

The protein resides in the cell inner membrane. In terms of biological role, catalyzes the excretion of spermidine. The polypeptide is Spermidine export protein MdtI (Photorhabdus laumondii subsp. laumondii (strain DSM 15139 / CIP 105565 / TT01) (Photorhabdus luminescens subsp. laumondii)).